A 285-amino-acid polypeptide reads, in one-letter code: Diphthine methyl ester synthase (285 aa).

S-adenosyl-L-methionine-binding positions include leucine 9, aspartate 84, glycine 87, 112 to 113 (SI), leucine 163, valine 221, and histidine 246.

This sequence belongs to the diphthine synthase family.

It localises to the cytoplasm. It carries out the reaction 2-[(3S)-amino-3-carboxypropyl]-L-histidyl-[translation elongation factor 2] + 4 S-adenosyl-L-methionine = diphthine methyl ester-[translation elongation factor 2] + 4 S-adenosyl-L-homocysteine + 3 H(+). Its pathway is protein modification; peptidyl-diphthamide biosynthesis. In terms of biological role, S-adenosyl-L-methionine-dependent methyltransferase that catalyzes four methylations of the modified target histidine residue in translation elongation factor 2 (EF-2), to form an intermediate called diphthine methyl ester. The four successive methylation reactions represent the second step of diphthamide biosynthesis. The polypeptide is Diphthine methyl ester synthase (dph5) (Emericella nidulans (strain FGSC A4 / ATCC 38163 / CBS 112.46 / NRRL 194 / M139) (Aspergillus nidulans)).